The sequence spans 253 residues: tRNA1(Val) (adenine(37)-N6)-methyltransferase (253 aa).

It belongs to the methyltransferase superfamily. tRNA (adenine-N(6)-)-methyltransferase family.

It localises to the cytoplasm. The catalysed reaction is adenosine(37) in tRNA1(Val) + S-adenosyl-L-methionine = N(6)-methyladenosine(37) in tRNA1(Val) + S-adenosyl-L-homocysteine + H(+). Its function is as follows. Specifically methylates the adenine in position 37 of tRNA(1)(Val) (anticodon cmo5UAC). The chain is tRNA1(Val) (adenine(37)-N6)-methyltransferase from Dickeya chrysanthemi (strain Ech1591) (Dickeya zeae (strain Ech1591)).